The primary structure comprises 206 residues: N-(5'-phosphoribosyl)anthranilate isomerase (206 aa).

Belongs to the TrpF family.

The catalysed reaction is N-(5-phospho-beta-D-ribosyl)anthranilate = 1-(2-carboxyphenylamino)-1-deoxy-D-ribulose 5-phosphate. It participates in amino-acid biosynthesis; L-tryptophan biosynthesis; L-tryptophan from chorismate: step 3/5. The sequence is that of N-(5'-phosphoribosyl)anthranilate isomerase from Pseudomonas putida (strain ATCC 47054 / DSM 6125 / CFBP 8728 / NCIMB 11950 / KT2440).